The following is a 228-amino-acid chain: ATP synthase F(0) complex subunit a (228 aa).

Helical transmembrane passes span 13–33 (NILA…IFPM), 69–89 (WALI…LGLL), 98–118 (QLSM…LIGL), 139–159 (IPTL…ALGV), and 194–214 (ILLF…ALVF).

This sequence belongs to the ATPase A chain family. Component of the ATP synthase complex composed at least of ATP5F1A/subunit alpha, ATP5F1B/subunit beta, ATP5MC1/subunit c (homooctomer), MT-ATP6/subunit a, MT-ATP8/subunit 8, ATP5ME/subunit e, ATP5MF/subunit f, ATP5MG/subunit g, ATP5MK/subunit k, ATP5MJ/subunit j, ATP5F1C/subunit gamma, ATP5F1D/subunit delta, ATP5F1E/subunit epsilon, ATP5PF/subunit F6, ATP5PB/subunit b, ATP5PD/subunit d, ATP5PO/subunit OSCP. ATP synthase complex consists of a soluble F(1) head domain (subunits alpha(3) and beta(3)) - the catalytic core - and a membrane F(0) domain - the membrane proton channel (subunits c, a, 8, e, f, g, k and j). These two domains are linked by a central stalk (subunits gamma, delta, and epsilon) rotating inside the F1 region and a stationary peripheral stalk (subunits F6, b, d, and OSCP). Interacts with DNAJC30; interaction is direct.

It localises to the mitochondrion inner membrane. It carries out the reaction H(+)(in) = H(+)(out). Its function is as follows. Subunit a, of the mitochondrial membrane ATP synthase complex (F(1)F(0) ATP synthase or Complex V) that produces ATP from ADP in the presence of a proton gradient across the membrane which is generated by electron transport complexes of the respiratory chain. ATP synthase complex consist of a soluble F(1) head domain - the catalytic core - and a membrane F(1) domain - the membrane proton channel. These two domains are linked by a central stalk rotating inside the F(1) region and a stationary peripheral stalk. During catalysis, ATP synthesis in the catalytic domain of F(1) is coupled via a rotary mechanism of the central stalk subunits to proton translocation. With the subunit c (ATP5MC1), forms the proton-conducting channel in the F(0) domain, that contains two crucial half-channels (inlet and outlet) that facilitate proton movement from the mitochondrial intermembrane space (IMS) into the matrix. Protons are taken up via the inlet half-channel and released through the outlet half-channel, following a Grotthuss mechanism. The protein is ATP synthase F(0) complex subunit a of Pelomedusa subrufa (African side-necked turtle).